Here is a 394-residue protein sequence, read N- to C-terminus: Elongation factor Tu (394 aa).

The tr-type G domain occupies lysine 10–isoleucine 204. The segment at glycine 19–threonine 26 is G1. Glycine 19 to threonine 26 contacts GTP. A Mg(2+)-binding site is contributed by threonine 26. A G2 region spans residues glycine 60 to serine 64. Residues aspartate 81–glycine 84 are G3. GTP contacts are provided by residues aspartate 81–histidine 85 and asparagine 136–aspartate 139. The interval asparagine 136–aspartate 139 is G4. Residues serine 174–leucine 176 are G5.

It belongs to the TRAFAC class translation factor GTPase superfamily. Classic translation factor GTPase family. EF-Tu/EF-1A subfamily. Monomer.

It localises to the cytoplasm. The enzyme catalyses GTP + H2O = GDP + phosphate + H(+). In terms of biological role, GTP hydrolase that promotes the GTP-dependent binding of aminoacyl-tRNA to the A-site of ribosomes during protein biosynthesis. In Rickettsia prowazekii (strain Madrid E), this protein is Elongation factor Tu.